A 254-amino-acid chain; its full sequence is Mannose-binding protein (254 aa).

The first 19 residues, M1 to A19, serve as a signal peptide directing secretion. Positions N46–R99 are disordered. Basic and acidic residues predominate over residues R51–E66. P57 carries the post-translational modification 4-hydroxyproline. 5-hydroxylysine is present on residues K58 and K61. 2 O-linked (Gal...) hydroxylysine glycosylation sites follow: K58 and K61. P75 is modified (4-hydroxyproline). 5-hydroxylysine is present on residues K93 and K96. In terms of domain architecture, C-type lectin spans V140 to I250. Intrachain disulfides connect C161–C252 and C229–C243.

In terms of assembly, oligomeric complex of 3 or more homotrimers.

The protein resides in the secreted. Functionally, calcium-dependent lectin involved in innate immune defense. Binds mannose, fucose and N-acetylglucosamine on different microorganisms and activates the lectin complement pathway. In Gallus gallus (Chicken), this protein is Mannose-binding protein.